The following is a 177-amino-acid chain: O-acetyl-ADP-ribose deacetylase (177 aa).

In terms of domain architecture, Macro spans 1–175 (MKSRIHVQHG…LYERLLTQQG (175 aa)). Substrate-binding positions include 11–12 (DI), Asn-25, 33–35 (GVD), and 122–126 (STGAY). Asp-35 functions as the Proton acceptor in the catalytic mechanism.

Belongs to the MacroD-type family. YmdB subfamily. Homodimer. Interacts with RNase III.

It carries out the reaction 3''-O-acetyl-ADP-D-ribose + H2O = ADP-D-ribose + acetate + H(+). The enzyme catalyses 2''-O-acetyl-ADP-D-ribose + H2O = ADP-D-ribose + acetate + H(+). In terms of biological role, deacetylates O-acetyl-ADP ribose to yield ADP-ribose and free acetate. Down-regulates ribonuclease 3 (RNase III) activity. Acts by interacting directly with the region of the ribonuclease that is required for dimerization/activation. The polypeptide is O-acetyl-ADP-ribose deacetylase (Citrobacter koseri (strain ATCC BAA-895 / CDC 4225-83 / SGSC4696)).